Here is a 431-residue protein sequence, read N- to C-terminus: UDP-N-acetylglucosamine 1-carboxyvinyltransferase (431 aa).

22 to 23 (KN) serves as a coordination point for phosphoenolpyruvate. Arg-102 provides a ligand contact to UDP-N-acetyl-alpha-D-glucosamine. Cys-126 (proton donor) is an active-site residue. Residue Cys-126 is modified to 2-(S-cysteinyl)pyruvic acid O-phosphothioketal. Residues Asp-318 and Ile-340 each contribute to the UDP-N-acetyl-alpha-D-glucosamine site.

It belongs to the EPSP synthase family. MurA subfamily.

It is found in the cytoplasm. It catalyses the reaction phosphoenolpyruvate + UDP-N-acetyl-alpha-D-glucosamine = UDP-N-acetyl-3-O-(1-carboxyvinyl)-alpha-D-glucosamine + phosphate. It participates in cell wall biogenesis; peptidoglycan biosynthesis. In terms of biological role, cell wall formation. Adds enolpyruvyl to UDP-N-acetylglucosamine. The protein is UDP-N-acetylglucosamine 1-carboxyvinyltransferase of Bartonella tribocorum (strain CIP 105476 / IBS 506).